A 348-amino-acid chain; its full sequence is tRNA pseudouridine synthase B (348 aa).

D52 serves as the catalytic Nucleophile.

Belongs to the pseudouridine synthase TruB family. Type 1 subfamily.

It carries out the reaction uridine(55) in tRNA = pseudouridine(55) in tRNA. Functionally, responsible for synthesis of pseudouridine from uracil-55 in the psi GC loop of transfer RNAs. This chain is tRNA pseudouridine synthase B, found in Rhodopirellula baltica (strain DSM 10527 / NCIMB 13988 / SH1).